The sequence spans 452 residues: Zinc finger protein GAI-ASSOCIATED FACTOR 1 (452 aa).

Positions M1 to T32 are enriched in polar residues. A disordered region spans residues M1 to S47. S53 carries the phosphoserine modification. 2 C2H2-type zinc fingers span residues F63–H85 and Y104–H134. The Nuclear localization signal signature appears at I126–K133. Residues W139–G162 form a C2H2-type 2; degenerate zinc finger. C141, C144, H157, C161, C168, C170, H183, and C187 together coordinate Zn(2+). Residues Y166–A189 form a CCHC-type 2; atypical zinc finger. The interval R176–D188 is SHR-binding. The interval R196–E254 is disordered. The span at I231 to P245 shows a compositional bias: polar residues.

As to quaternary structure, interacts with the DELLA proteins (e.g. GAI/RGA2, RGA, RGL1, RGL2 and RGLG3), acting as coactivators and with TPR1 and TPR4, acting as a corepressors, at the promoter of GA20OX2 gene. As to expression, observed in vegetative tissues. Mainly expressed in hypocotyls, petioles, shoot apices, root tips, and trichomes, and, at low levels, in leaves, stems and flowers.

The protein resides in the nucleus. With respect to regulation, transcription activation is repressed by gibberellic acid GA(3) in the presence of TPR4. Functionally, transcription factor that acts as a positive regulator of gibberellin (GA) action, homeostasis and signaling. GA converts the GAF1 complex from transcriptional activator to repressor via the degradation of DELLA proteins. The chain is Zinc finger protein GAI-ASSOCIATED FACTOR 1 from Arabidopsis thaliana (Mouse-ear cress).